The primary structure comprises 387 residues: 3-ketoacyl-CoA thiolase (387 aa).

Catalysis depends on C91, which acts as the Acyl-thioester intermediate. Residues H343 and C373 each act as proton acceptor in the active site.

Belongs to the thiolase-like superfamily. Thiolase family. As to quaternary structure, heterotetramer of two alpha chains (FadB) and two beta chains (FadA).

The protein resides in the cytoplasm. The enzyme catalyses an acyl-CoA + acetyl-CoA = a 3-oxoacyl-CoA + CoA. It participates in lipid metabolism; fatty acid beta-oxidation. Functionally, catalyzes the final step of fatty acid oxidation in which acetyl-CoA is released and the CoA ester of a fatty acid two carbons shorter is formed. In Pectobacterium carotovorum subsp. carotovorum (strain PC1), this protein is 3-ketoacyl-CoA thiolase.